The sequence spans 128 residues: MFAVIKTGGRQYRVVPDDVLEIGKIAGDVGTIVQLGEVLVLGGDTPVLGLPTVAGASVAAEVLQHKRGPKVIAFKKRRRKHSKRKRGYRDEITVLRITEILADGKTPTVGPRPKKEKVVEPAEGEGDH.

The tract at residues 104 to 128 (GKTPTVGPRPKKEKVVEPAEGEGDH) is disordered. The segment covering 116–128 (EKVVEPAEGEGDH) has biased composition (basic and acidic residues).

This sequence belongs to the bacterial ribosomal protein bL21 family. As to quaternary structure, part of the 50S ribosomal subunit. Contacts protein L20.

Functionally, this protein binds to 23S rRNA in the presence of protein L20. The chain is Large ribosomal subunit protein bL21 from Nitrobacter hamburgensis (strain DSM 10229 / NCIMB 13809 / X14).